The following is a 64-amino-acid chain: Large ribosomal subunit protein bL32 (64 aa).

Residues 1 to 35 (MAVQKSRVTPSRRGMRRAHDALSAKQLSTDPTTGE) are disordered.

It belongs to the bacterial ribosomal protein bL32 family.

This chain is Large ribosomal subunit protein bL32, found in Stenotrophomonas maltophilia (strain R551-3).